The primary structure comprises 209 residues: Probable L-serine dehydratase, alpha chain (209 aa).

The protein belongs to the iron-sulfur dependent L-serine dehydratase family. Heterodimer of an alpha chain and a beta chain. Requires [4Fe-4S] cluster as cofactor.

The catalysed reaction is L-serine = pyruvate + NH4(+). Its pathway is carbohydrate biosynthesis; gluconeogenesis. In Latilactobacillus sakei (Lactobacillus sakei), this protein is Probable L-serine dehydratase, alpha chain (sdhA).